Consider the following 576-residue polypeptide: Adenine deaminase (576 aa).

It belongs to the metallo-dependent hydrolases superfamily. Adenine deaminase family. Mn(2+) serves as cofactor.

It catalyses the reaction adenine + H2O + H(+) = hypoxanthine + NH4(+). In Bacillus pumilus (strain SAFR-032), this protein is Adenine deaminase.